The primary structure comprises 237 residues: Uridylate kinase (237 aa).

10 to 13 (KLSG) is an ATP binding site. Gly-51 lines the UMP pocket. ATP-binding residues include Gly-52 and Arg-56. Residues Asp-71 and 132–139 (MGMPFFST) each bind UMP. ATP-binding residues include Asn-160, Tyr-166, and Asp-169.

This sequence belongs to the UMP kinase family. As to quaternary structure, homohexamer.

Its subcellular location is the cytoplasm. The enzyme catalyses UMP + ATP = UDP + ADP. It participates in pyrimidine metabolism; CTP biosynthesis via de novo pathway; UDP from UMP (UMPK route): step 1/1. With respect to regulation, inhibited by UTP. Its function is as follows. Catalyzes the reversible phosphorylation of UMP to UDP. The polypeptide is Uridylate kinase (Nocardioides sp. (strain ATCC BAA-499 / JS614)).